The primary structure comprises 591 residues: Calnexin (591 aa).

Residues 1–20 form the signal peptide; sequence MEGKWLLCLLLVLGTAAIQA. The Lumenal portion of the chain corresponds to 21–482; it reads HDGHDDDMID…QMLEAAEERP (462 aa). Ca(2+) contacts are provided by S75 and D118. N6-acetyllysine is present on K138. The cysteines at positions 161 and 195 are disulfide-linked. 4 residues coordinate an alpha-D-glucoside: Y165, K167, Y186, and D193. Positions 261 to 347 are disordered; the sequence is GNLLNDMTPP…EKPEDWDEDM (87 aa). Over residues 275–320 the composition is skewed to basic and acidic residues; it reads REIEDPEDRKPEDWDERPKIADPDAVKPDDWDEDAPSKIPDEEATK. Positions 277-410 are p domain (Extended arm); that stretch reads IEDPEDRKPE…RKIPNPDFFE (134 aa). 5 repeat units span residues 279–291, 296–308, 315–327, 334–346, and 349–359. 4 X approximate repeats regions lie at residues 279-346 and 349-406; these read DPED…WDED and GEWE…IPNP. Residues 324–347 are compositionally biased toward acidic residues; it reads WLDDEPEYIPDPDAEKPEDWDEDM. The interval 327–360 is interaction with PPIB; it reads DEPEYIPDPDAEKPEDWDEDMDGEWEAPQIANPK. A disulfide bond links C361 and C367. A run of 3 repeats spans residues 368 to 378, 382 to 392, and 396 to 406. E426 is a binding site for an alpha-D-glucoside. D437 is a binding site for Ca(2+). A helical transmembrane segment spans residues 483–503; sequence WLWVVYILTVALPVFLVILFC. Residues C503 and C504 are each lipidated (S-palmitoyl cysteine). Residues 504 to 591 lie on the Cytoplasmic side of the membrane; it reads CSGKKQSNAM…SPRNRKPRRE (88 aa). The segment at 504–591 is sufficient to mediate interaction with SGIP1; sequence CSGKKQSNAM…SPRNRKPRRE (88 aa). The segment covering 514–538 has biased composition (basic and acidic residues); that stretch reads EYKKTDAPQPDVKDEEGKEEEKNKG. Positions 514 to 591 are disordered; the sequence is EYKKTDAPQP…SPRNRKPRRE (78 aa). Residue S553 is modified to Phosphoserine. Residues 555–568 are compositionally biased toward acidic residues; it reads AEEDGGTGSQDEED. T561 is modified (phosphothreonine). Residue S563 is modified to Phosphoserine; by MAPK3. At S582 the chain carries Phosphoserine.

Belongs to the calreticulin family. In terms of assembly, interacts with MAPK3/ERK1. Interacts with KCNH2. Associates with ribosomes. Interacts with SGIP1; involved in negative regulation of endocytosis. The palmitoylated form interacts with the ribosome-translocon complex component SSR1, promoting efficient folding of glycoproteins. Interacts with SERPINA2P/SERPINA2 and with the S and Z variants of SERPINA1. Interacts with PPIB. Interacts with ZNRF4. Interacts with SMIM22. Interacts with TMX2. Interacts with TMEM35A/NACHO and CHRNA7. Interacts with reticulophagy regulators RETREG2 and RETREG3. Interacts with DNM1L; may form part of a larger protein complex at the ER-mitochondrial interface during mitochondrial fission. Interacts with ADAM7. Phosphorylated at Ser-563 by MAPK3/ERK1. Phosphorylation by MAPK3/ERK1 increases its association with ribosomes. In terms of processing, palmitoylation by DHHC6 leads to the preferential localization to the perinuclear rough ER. It mediates the association of calnexin with the ribosome-translocon complex (RTC) which is required for efficient folding of glycosylated proteins. Post-translationally, ubiquitinated, leading to proteasomal degradation. Probably ubiquitinated by ZNRF4.

Its subcellular location is the endoplasmic reticulum membrane. The protein localises to the mitochondrion membrane. It is found in the melanosome membrane. Functionally, calcium-binding protein that interacts with newly synthesized monoglucosylated glycoproteins in the endoplasmic reticulum. It may act in assisting protein assembly and/or in the retention within the ER of unassembled protein subunits. It seems to play a major role in the quality control apparatus of the ER by the retention of incorrectly folded proteins. Associated with partial T-cell antigen receptor complexes that escape the ER of immature thymocytes, it may function as a signaling complex regulating thymocyte maturation. Additionally it may play a role in receptor-mediated endocytosis at the synapse. The polypeptide is Calnexin (Canx) (Rattus norvegicus (Rat)).